Consider the following 428-residue polypeptide: 3-phosphoshikimate 1-carboxyvinyltransferase (428 aa).

Residues lysine 19, serine 20, and arginine 24 each coordinate 3-phosphoshikimate. Lysine 19 serves as a coordination point for phosphoenolpyruvate. Glycine 91 and arginine 119 together coordinate phosphoenolpyruvate. Serine 164, glutamine 166, aspartate 312, and lysine 339 together coordinate 3-phosphoshikimate. Position 166 (glutamine 166) interacts with phosphoenolpyruvate. Aspartate 312 acts as the Proton acceptor in catalysis. 2 residues coordinate phosphoenolpyruvate: arginine 343 and arginine 386.

The protein belongs to the EPSP synthase family. Monomer.

The protein resides in the cytoplasm. The enzyme catalyses 3-phosphoshikimate + phosphoenolpyruvate = 5-O-(1-carboxyvinyl)-3-phosphoshikimate + phosphate. It participates in metabolic intermediate biosynthesis; chorismate biosynthesis; chorismate from D-erythrose 4-phosphate and phosphoenolpyruvate: step 6/7. Functionally, catalyzes the transfer of the enolpyruvyl moiety of phosphoenolpyruvate (PEP) to the 5-hydroxyl of shikimate-3-phosphate (S3P) to produce enolpyruvyl shikimate-3-phosphate and inorganic phosphate. In Bacillus licheniformis (strain ATCC 14580 / DSM 13 / JCM 2505 / CCUG 7422 / NBRC 12200 / NCIMB 9375 / NCTC 10341 / NRRL NRS-1264 / Gibson 46), this protein is 3-phosphoshikimate 1-carboxyvinyltransferase.